We begin with the raw amino-acid sequence, 103 residues long: MYAVIKTGGKQYKVAAGEKIKVEQIAADVGQEIVIDQVLAVGEGSAIKVGTPLVSGATVTVTVLSHGRHDKVRIFKMRRRKHYQKRQGHRQNFTELQIGAIVG.

It belongs to the bacterial ribosomal protein bL21 family. As to quaternary structure, part of the 50S ribosomal subunit. Contacts protein L20.

Its function is as follows. This protein binds to 23S rRNA in the presence of protein L20. In Polaromonas sp. (strain JS666 / ATCC BAA-500), this protein is Large ribosomal subunit protein bL21.